A 119-amino-acid chain; its full sequence is Large ribosomal subunit protein uL22 (119 aa).

It belongs to the universal ribosomal protein uL22 family. Part of the 50S ribosomal subunit.

Functionally, this protein binds specifically to 23S rRNA; its binding is stimulated by other ribosomal proteins, e.g. L4, L17, and L20. It is important during the early stages of 50S assembly. It makes multiple contacts with different domains of the 23S rRNA in the assembled 50S subunit and ribosome. Its function is as follows. The globular domain of the protein is located near the polypeptide exit tunnel on the outside of the subunit, while an extended beta-hairpin is found that lines the wall of the exit tunnel in the center of the 70S ribosome. In Rickettsia felis (strain ATCC VR-1525 / URRWXCal2) (Rickettsia azadi), this protein is Large ribosomal subunit protein uL22.